The chain runs to 113 residues: Large ribosomal subunit protein bL19 (113 aa).

Belongs to the bacterial ribosomal protein bL19 family.

Functionally, this protein is located at the 30S-50S ribosomal subunit interface and may play a role in the structure and function of the aminoacyl-tRNA binding site. In Rhodococcus erythropolis (strain PR4 / NBRC 100887), this protein is Large ribosomal subunit protein bL19.